The following is a 591-amino-acid chain: Aspartate--tRNA(Asp/Asn) ligase (591 aa).

Position 170 (glutamate 170) interacts with L-aspartate. The tract at residues 194–197 is aspartate; the sequence is QLFK. Arginine 216 contributes to the L-aspartate binding site. ATP is bound by residues 216–218 and glutamine 225; that span reads RDE. Histidine 448 contacts L-aspartate. Glutamate 482 contacts ATP. Arginine 489 lines the L-aspartate pocket. 534-537 lines the ATP pocket; the sequence is GWDR. Positions 559–591 are disordered; it reads GGVDPLTDAPAPITEQQRKESGIDVKPEPSKPH. Positions 574 to 591 are enriched in basic and acidic residues; that stretch reads QQRKESGIDVKPEPSKPH.

It belongs to the class-II aminoacyl-tRNA synthetase family. Type 1 subfamily. In terms of assembly, homodimer.

It localises to the cytoplasm. The catalysed reaction is tRNA(Asx) + L-aspartate + ATP = L-aspartyl-tRNA(Asx) + AMP + diphosphate. In terms of biological role, aspartyl-tRNA synthetase with relaxed tRNA specificity since it is able to aspartylate not only its cognate tRNA(Asp) but also tRNA(Asn). Reaction proceeds in two steps: L-aspartate is first activated by ATP to form Asp-AMP and then transferred to the acceptor end of tRNA(Asp/Asn). In Mycobacterium avium (strain 104), this protein is Aspartate--tRNA(Asp/Asn) ligase.